The chain runs to 97 residues: UPF0235 protein Aasi_0294 (97 aa).

This sequence belongs to the UPF0235 family.

This Amoebophilus asiaticus (strain 5a2) protein is UPF0235 protein Aasi_0294.